Reading from the N-terminus, the 101-residue chain is NADH-quinone oxidoreductase subunit K 1 (101 aa).

3 helical membrane passes run 4-24 (IGTM…TVGV), 31-51 (VVIL…LVAF), and 64-84 (IFVM…VIAF).

It belongs to the complex I subunit 4L family. In terms of assembly, NDH-1 is composed of 14 different subunits. Subunits NuoA, H, J, K, L, M, N constitute the membrane sector of the complex.

It localises to the cell inner membrane. The enzyme catalyses a quinone + NADH + 5 H(+)(in) = a quinol + NAD(+) + 4 H(+)(out). Functionally, NDH-1 shuttles electrons from NADH, via FMN and iron-sulfur (Fe-S) centers, to quinones in the respiratory chain. The immediate electron acceptor for the enzyme in this species is believed to be ubiquinone. Couples the redox reaction to proton translocation (for every two electrons transferred, four hydrogen ions are translocated across the cytoplasmic membrane), and thus conserves the redox energy in a proton gradient. In Koribacter versatilis (strain Ellin345), this protein is NADH-quinone oxidoreductase subunit K 1.